Here is a 688-residue protein sequence, read N- to C-terminus: Glycine--tRNA ligase beta subunit (688 aa).

Belongs to the class-II aminoacyl-tRNA synthetase family. In terms of assembly, tetramer of two alpha and two beta subunits.

Its subcellular location is the cytoplasm. The enzyme catalyses tRNA(Gly) + glycine + ATP = glycyl-tRNA(Gly) + AMP + diphosphate. In Vibrio parahaemolyticus serotype O3:K6 (strain RIMD 2210633), this protein is Glycine--tRNA ligase beta subunit.